A 179-amino-acid chain; its full sequence is Probable RNA 2'-phosphotransferase (179 aa).

This sequence belongs to the KptA/TPT1 family.

Removes the 2'-phosphate from RNA via an intermediate in which the phosphate is ADP-ribosylated by NAD followed by a presumed transesterification to release the RNA and generate ADP-ribose 1''-2''-cyclic phosphate (APPR&gt;P). May function as an ADP-ribosylase. The polypeptide is Probable RNA 2'-phosphotransferase (Fusobacterium nucleatum subsp. nucleatum (strain ATCC 25586 / DSM 15643 / BCRC 10681 / CIP 101130 / JCM 8532 / KCTC 2640 / LMG 13131 / VPI 4355)).